Consider the following 222-residue polypeptide: uncharacterized protein (222 aa).

7 helical membrane-spanning segments follow: residues 26 to 46 (YGLL…SQQM), 48 to 68 (LPYP…FLTV), 75 to 95 (WGLV…GPIL), 107 to 127 (VITS…AYVL), 139 to 159 (FITA…FFQI), 166 to 186 (ISAG…SAII), and 198 to 218 (ISLY…FGIA).

This sequence belongs to the BI1 family.

It is found in the cell membrane. This is an uncharacterized protein from Pseudomonas aeruginosa (strain ATCC 15692 / DSM 22644 / CIP 104116 / JCM 14847 / LMG 12228 / 1C / PRS 101 / PAO1).